The primary structure comprises 183 residues: Non-classical export protein 2 homolog (183 aa).

Over 1–8 the chain is Cytoplasmic; it reads MVGIRQYG. Residues 9-29 traverse the membrane as a helical segment; the sequence is VFTWVFRTFQLAIDTIVLALA. Residues 30 to 44 are Extracellular-facing; sequence SALVNQQTSGGSPGK. The chain crosses the membrane as a helical span at residues 45–65; the sequence is INFSVAVGSFAILTFFLTAVG. The Cytoplasmic portion of the chain corresponds to 66 to 75; sequence RFLPTILGNP. Residues 76–96 form a helical membrane-spanning segment; sequence WLIAFYDFVNWVFALTGGCCI. Topologically, residues 97-131 are extracellular; sequence AVAIRVHACDNQKYLDRNHYTQGSMRRCQELKALC. A helical membrane pass occupies residues 132–152; that stretch reads FFLWFMFGLYVASFIVQIFIA. At 153–183 the chain is on the cytoplasmic side; that stretch reads KNDTPNYTFRGRGRGKGSGPAVAPRPVMSAV. The disordered stretch occupies residues 163–183; that stretch reads GRGRGKGSGPAVAPRPVMSAV.

The protein belongs to the NCE102 family.

The protein localises to the cytoplasm. It is found in the golgi apparatus membrane. Its subcellular location is the cell membrane. Its function is as follows. Involved in membrane organization and might act as a sensor of sphingolipids that regulates plasma membrane function. Involved in a novel pathway of export of proteins that lack a cleavable signal sequence. This Schizosaccharomyces pombe (strain 972 / ATCC 24843) (Fission yeast) protein is Non-classical export protein 2 homolog (fhn1).